The sequence spans 313 residues: Putative S-adenosyl-L-methionine-dependent methyltransferase MAP_3563 (313 aa).

S-adenosyl-L-methionine is bound by residues aspartate 139 and 168–169 (DL).

This sequence belongs to the UPF0677 family.

Exhibits S-adenosyl-L-methionine-dependent methyltransferase activity. The protein is Putative S-adenosyl-L-methionine-dependent methyltransferase MAP_3563 of Mycolicibacterium paratuberculosis (strain ATCC BAA-968 / K-10) (Mycobacterium paratuberculosis).